The chain runs to 90 residues: Protein RALF-like 3 (90 aa).

The signal sequence occupies residues 1-29 (MSNLRGTNRFILVAVLVSFVFLSIMNAEA). Cystine bridges form between Cys59/Cys67 and Cys80/Cys86.

The protein belongs to the plant rapid alkalinization factor (RALF) family.

It is found in the secreted. Functionally, cell signaling peptide that may regulate plant stress, growth, and development. Mediates a rapid alkalinization of extracellular space by mediating a transient increase in the cytoplasmic Ca(2+) concentration leading to a calcium-dependent signaling events through a cell surface receptor and a concomitant activation of some intracellular mitogen-activated protein kinases. The protein is Protein RALF-like 3 (RALFL3) of Arabidopsis thaliana (Mouse-ear cress).